We begin with the raw amino-acid sequence, 226 residues long: UPF0758 protein GTNG_2548 (226 aa).

An MPN domain is found at 104–226 (VIRCPEDGAK…FISLKEKGYV (123 aa)). 3 residues coordinate Zn(2+): histidine 175, histidine 177, and aspartate 188. A JAMM motif motif is present at residues 175–188 (HNHPSGDPTPSRED).

The protein belongs to the UPF0758 family.

The sequence is that of UPF0758 protein GTNG_2548 from Geobacillus thermodenitrificans (strain NG80-2).